A 489-amino-acid polypeptide reads, in one-letter code: Rhamnulokinase (489 aa).

ATP is bound at residue 13 to 17 (ASSGR). C68 and C222 are joined by a disulfide. Substrate-binding positions include G83 and 236–238 (HDT). Residue D237 is the Proton acceptor of the active site. Position 259 (T259) interacts with ATP. Position 296 (N296) interacts with substrate. Q304 contacts ATP. The cysteines at positions 353 and 370 are disulfide-linked. G402 lines the ATP pocket. A disulfide bridge connects residues C413 and C417.

It belongs to the rhamnulokinase family. Requires Mg(2+) as cofactor.

It catalyses the reaction L-rhamnulose + ATP = L-rhamnulose 1-phosphate + ADP + H(+). It participates in carbohydrate degradation; L-rhamnose degradation; glycerone phosphate from L-rhamnose: step 2/3. Functionally, involved in the catabolism of L-rhamnose (6-deoxy-L-mannose). Catalyzes the transfer of the gamma-phosphate group from ATP to the 1-hydroxyl group of L-rhamnulose to yield L-rhamnulose 1-phosphate. In Salmonella paratyphi A (strain AKU_12601), this protein is Rhamnulokinase.